Reading from the N-terminus, the 500-residue chain is Betaine aldehyde dehydrogenase, chloroplastic (500 aa).

Residues 1-7 constitute a chloroplast transit peptide; sequence MSMPIPS. Residue 238–243 coordinates NAD(+); it reads GSSATG. The active-site Proton acceptor is the glutamate 260. The active-site Nucleophile is the cysteine 294.

This sequence belongs to the aldehyde dehydrogenase family. In terms of assembly, homodimer.

The protein resides in the plastid. The protein localises to the chloroplast. It catalyses the reaction betaine aldehyde + NAD(+) + H2O = glycine betaine + NADH + 2 H(+). Its pathway is amine and polyamine biosynthesis; betaine biosynthesis via choline pathway; betaine from betaine aldehyde: step 1/1. This is Betaine aldehyde dehydrogenase, chloroplastic from Beta vulgaris (Sugar beet).